We begin with the raw amino-acid sequence, 506 residues long: Anaerobic nitric oxide reductase transcription regulator NorR (506 aa).

At D57 the chain carries 4-aspartylphosphate. The Sigma-54 factor interaction domain maps to 187–416 (MIGLSPNMMQ…LEHAIHRAVV (230 aa)). Residues 215 to 222 (GETGTGKE) and 278 to 287 (ADNGTLFLDE) contribute to the ATP site. The segment at residues 481–500 (WAACARALETDVANLHRLAK) is a DNA-binding region (H-T-H motif).

Its pathway is nitrogen metabolism; nitric oxide reduction. Its function is as follows. Required for the expression of anaerobic nitric oxide (NO) reductase, acts as a transcriptional activator for at least the norVW operon. Activation also requires sigma-54. This Citrobacter koseri (strain ATCC BAA-895 / CDC 4225-83 / SGSC4696) protein is Anaerobic nitric oxide reductase transcription regulator NorR.